The following is a 440-amino-acid chain: Probable secretory pathway GDP dissociation inhibitor 1 (440 aa).

It belongs to the Rab GDI family.

The polypeptide is Probable secretory pathway GDP dissociation inhibitor 1 (gdi1) (Schizosaccharomyces pombe (strain 972 / ATCC 24843) (Fission yeast)).